We begin with the raw amino-acid sequence, 634 residues long: DNA gyrase subunit B (634 aa).

A Toprim domain is found at 416–530 (REIYIVEGDS…NGHVYIAMPP (115 aa)). Mg(2+)-binding residues include E422, D495, and D497.

The protein belongs to the type II topoisomerase GyrB family. Heterotetramer, composed of two GyrA and two GyrB chains. In the heterotetramer, GyrA contains the active site tyrosine that forms a transient covalent intermediate with DNA, while GyrB binds cofactors and catalyzes ATP hydrolysis. It depends on Mg(2+) as a cofactor. Mn(2+) serves as cofactor. Ca(2+) is required as a cofactor.

It localises to the cytoplasm. It carries out the reaction ATP-dependent breakage, passage and rejoining of double-stranded DNA.. In terms of biological role, a type II topoisomerase that negatively supercoils closed circular double-stranded (ds) DNA in an ATP-dependent manner to modulate DNA topology and maintain chromosomes in an underwound state. Negative supercoiling favors strand separation, and DNA replication, transcription, recombination and repair, all of which involve strand separation. Also able to catalyze the interconversion of other topological isomers of dsDNA rings, including catenanes and knotted rings. Type II topoisomerases break and join 2 DNA strands simultaneously in an ATP-dependent manner. In Borrelia hermsii, this protein is DNA gyrase subunit B.